The primary structure comprises 421 residues: UDP-N-acetylglucosamine 1-carboxyvinyltransferase (421 aa).

23-24 lines the phosphoenolpyruvate pocket; the sequence is KN. Arg-92 contributes to the UDP-N-acetyl-alpha-D-glucosamine binding site. The Proton donor role is filled by Cys-116. Cys-116 is subject to 2-(S-cysteinyl)pyruvic acid O-phosphothioketal. UDP-N-acetyl-alpha-D-glucosamine-binding positions include 121–125, 161–164, Asp-306, and Ile-328; these read RPVDL and KVSV.

This sequence belongs to the EPSP synthase family. MurA subfamily.

The protein localises to the cytoplasm. The catalysed reaction is phosphoenolpyruvate + UDP-N-acetyl-alpha-D-glucosamine = UDP-N-acetyl-3-O-(1-carboxyvinyl)-alpha-D-glucosamine + phosphate. Its pathway is cell wall biogenesis; peptidoglycan biosynthesis. In terms of biological role, cell wall formation. Adds enolpyruvyl to UDP-N-acetylglucosamine. This Vibrio campbellii (strain ATCC BAA-1116) protein is UDP-N-acetylglucosamine 1-carboxyvinyltransferase.